The chain runs to 153 residues: MSLDLALDVQYATASDYLPSEEQFSLWVKTAIGNSMEQAELTIRIVDARESQMLNSTYRGKDKPTNVLSFPFEAPPEIELPLLGDLVICAAVVENEAREQDKILEAHWAHMVVHGCLHLLGYDHIEDEEAEEMESLETQLIESLGFTDPYKEQ.

Positions 114, 118, and 124 each coordinate Zn(2+).

This sequence belongs to the endoribonuclease YbeY family. It depends on Zn(2+) as a cofactor.

The protein localises to the cytoplasm. Functionally, single strand-specific metallo-endoribonuclease involved in late-stage 70S ribosome quality control and in maturation of the 3' terminus of the 16S rRNA. This chain is Endoribonuclease YbeY, found in Shewanella sp. (strain MR-7).